The sequence spans 221 residues: Phosphate-specific transport system accessory protein PhoU homolog 1 (221 aa).

Belongs to the PhoU family. Homodimer.

It is found in the cytoplasm. Plays a role in the regulation of phosphate uptake. In this role, it may bind, possibly as a chaperone, to PhoR, PhoP or a PhoR-PhoP complex to promote dephosphorylation of phospho-PhoP, or inhibit formation of the PhoR-PhoP transitory complex. This is Phosphate-specific transport system accessory protein PhoU homolog 1 (phoU1) from Mycobacterium bovis (strain ATCC BAA-935 / AF2122/97).